The following is a 435-amino-acid chain: MTILALGINHKTASVSLREKVAFVEDKRQRAFEQIRDQSLAESVVILSTCNRTELYFHQPKIPPQEEHPDNIAWREQCFNWFAEIHQLDKEELSEAYYFKQNLEAARHLMSVACGLDSLILGEPQILGQVKQAYQESEEFYHSQGSGVSTNLSRLFQKTFATAKRVRSETEIGSSAVSVAYAACGLARQIFDDFTKLRFLLVGAGETIELVARHLINHGAKNIMIANRTHIRAEMLAVKLDIPMQILSLSALQIGLNQADVVICSTGSPDILITKEMVEQAQKQRRFDPMLLIDIAVPRDIDEKAGELDSIYAYSVDDLQNIIQQNIAQRQQAAEQAKEIVIEEAKDFFVWLKQQQSTNLIKHYRQNAEEIRLDLLEKALSALQQGQDCEKVLNELSYKLTNQLLHIPTQALQAMAKNSNVKGLQSFSKALKLEE.

Residues 49–52, Ser-118, 123–125, and Gln-129 contribute to the substrate site; these read TCNR and EPQ. Cys-50 (nucleophile) is an active-site residue. 203 to 208 provides a ligand contact to NADP(+); the sequence is GAGETI.

Belongs to the glutamyl-tRNA reductase family. In terms of assembly, homodimer.

It catalyses the reaction (S)-4-amino-5-oxopentanoate + tRNA(Glu) + NADP(+) = L-glutamyl-tRNA(Glu) + NADPH + H(+). It participates in porphyrin-containing compound metabolism; protoporphyrin-IX biosynthesis; 5-aminolevulinate from L-glutamyl-tRNA(Glu): step 1/2. Its function is as follows. Catalyzes the NADPH-dependent reduction of glutamyl-tRNA(Glu) to glutamate 1-semialdehyde (GSA). The polypeptide is Glutamyl-tRNA reductase (Glaesserella parasuis serovar 5 (strain SH0165) (Haemophilus parasuis)).